We begin with the raw amino-acid sequence, 194 residues long: Segregation and condensation protein B (194 aa).

This sequence belongs to the ScpB family. In terms of assembly, homodimer. Homodimerization may be required to stabilize the binding of ScpA to the Smc head domains. Component of a cohesin-like complex composed of ScpA, ScpB and the Smc homodimer, in which ScpA and ScpB bind to the head domain of Smc. The presence of the three proteins is required for the association of the complex with DNA.

The protein localises to the cytoplasm. Participates in chromosomal partition during cell division. May act via the formation of a condensin-like complex containing Smc and ScpA that pull DNA away from mid-cell into both cell halves. In Streptococcus agalactiae serotype Ia (strain ATCC 27591 / A909 / CDC SS700), this protein is Segregation and condensation protein B.